Here is a 470-residue protein sequence, read N- to C-terminus: Syncoilin (470 aa).

Positions 1–43 (MASPEPLRGGDGARASREPHTEASFPLQESESPKEAKTFNPEA) are disordered. The head stretch occupies residues 1–148 (MASPEPLRGG…TEGSLPAQPI (148 aa)). Residue serine 32 is modified to Phosphoserine. The IF rod domain occupies 157 to 452 (SVEDLERLEA…AMLPKSLEQA (296 aa)). The interval 158–192 (VEDLERLEARFQQCVQAVSQLEEERDQLIHELVLL) is coil 1A. The tract at residues 193–219 (REPALQEVQQVHQDILAAYKLHAQAEL) is linker 1. Residues 220 to 297 (ERDGLREEIR…KEQLQQQLEA (78 aa)) form a coil 1b region. A linker 2 region spans residues 298-337 (PPTQSDGHFLQESRRLSTQFENLMAESRQGLEEEYEPQLL). The residue at position 314 (serine 314) is a Phosphoserine. The segment at 338 to 445 (RLLERKEAGT…EELSTYKAML (108 aa)) is coil 2. A disordered region spans residues 446-470 (PKSLEQADAPTSQAGGVEAQSPGTV). The tail stretch occupies residues 446 to 470 (PKSLEQADAPTSQAGGVEAQSPGTV).

Belongs to the intermediate filament family. In terms of assembly, may link the dystrophin-associated glycoprotein complex (DAPC) to intracellular desmin (DES) filaments. Interacts with DES and DTNA. Detected strongly in skeletal muscle and heart and weakly in lung (at protein level). Highly expressed in skeletal muscle and lung and weakly in lung and testis.

Its subcellular location is the cytoplasm. The protein localises to the perinuclear region. Functionally, atypical type III intermediate filament (IF) protein that may play a supportive role in the efficient coupling of mechanical stress between the myofibril and fiber exterior. May facilitate lateral force transmission during skeletal muscle contraction. Does not form homofilaments nor heterofilaments with other IF proteins. The polypeptide is Syncoilin (Sync) (Mus musculus (Mouse)).